The following is a 931-amino-acid chain: Myelin regulatory factor homolog 1 (931 aa).

The Cytoplasmic portion of the chain corresponds to 1-658; it reads MSSSDLLKGE…SCGSRLSQGT (658 aa). The disordered stretch occupies residues 29 to 143; it reads TDEDDGSMVS…QQHQQTRGGN (115 aa). Positions 37–52 are enriched in polar residues; it reads VSPTSSADSMHQNLGV. Low complexity predominate over residues 53-68; it reads QQQQQQMLQAQQRQNQ. A compositionally biased stretch (polar residues) spans 117-126; the sequence is DNGNQTMNNI. Over residues 127 to 138 the composition is skewed to low complexity; that stretch reads QSQQLSQQQHQQ. The NDT80 DNA-binding region spans 169 to 436; that stretch reads GTAAVNQPTN…TNPGSFEPQD (268 aa). A Peptidase S74 domain is found at 483–582; sequence SDIRLKEAIT…RMTGDLDSKI (100 aa). The helical transmembrane segment at 659–679 threads the bilayer; sequence VVTLVSIMAACLLAMSALYVL. Residues 680–931 lie on the Lumenal side of the membrane; that stretch reads DWHNRNYGYH…FYRMCTLSSS (252 aa). Asparagine 797 and asparagine 912 each carry an N-linked (GlcNAc...) asparagine glycan.

Belongs to the MRF family. In terms of assembly, homotrimer. Interacts with myrf-2. Interacts (via C-terminus) with pan-1 (via LRR regions); the interaction promotes the role of myrf-1 in the synaptic remodeling of DD GABAergic motor neurons at the cell membrane. Myelin regulatory factor: Follows autocatalytic cleavage via the peptidase S74 domain. Autoprocessing is apparently constitutive and is essential for transcriptional activity. As to expression, widely expressed in many tissues, including neuronal, muscle and epidermal stem cells. In neurons, expressed in dorsal D (DD) GABAergic motor neurons.

The protein localises to the endoplasmic reticulum membrane. The protein resides in the nucleus. Its subcellular location is the apical cell membrane. It is found in the cytoplasm. In terms of biological role, constitutes a precursor of the transcription factor. Mediates the autocatalytic cleavage that releases the Myelin regulatory factor homolog 1, N-terminal component that specifically activates transcription of genes involved in synaptic rewiring during nervous system maturation. Functionally, membrane-bound part that has no transcription factor activity and remains attached to the endoplasmic reticulum membrane following cleavage. Transcription factor that specifically activates expression of genes involved in synaptic rewiring during nervous system maturation. Specifically required for dorsal D (DD) GABAergic motor neurons synaptic rewiring. Acts in complex with myrf-2 paralog. This is Myelin regulatory factor homolog 1 from Caenorhabditis elegans.